The sequence spans 330 residues: G-protein coupled receptor 3 (330 aa).

The Extracellular portion of the chain corresponds to 1–42; sequence MMWGAGSSMAWFSAGSGSVNVSSVDPVEEPTGPATLLPSPRA. N20 carries N-linked (GlcNAc...) asparagine glycosylation. A helical membrane pass occupies residues 43 to 62; that stretch reads WDVVLCISGTLVSCENALVV. The Cytoplasmic portion of the chain corresponds to 63–74; it reads AIIVGTPAFRAP. The chain crosses the membrane as a helical span at residues 75 to 98; the sequence is MFLLVGSLAVADLLAGLGLVLHFA. The Extracellular portion of the chain corresponds to 99-110; that stretch reads ADFCIGSPEMSL. A helical transmembrane segment spans residues 111-132; it reads MLVGVLAMAFTASIGSLLAITV. The Cytoplasmic segment spans residues 133 to 153; sequence DRYLSLYNALTYYSETTVTRT. A helical membrane pass occupies residues 154–173; sequence YVMLALVWVGALGLGLVPVL. Over 174-198 the chain is Extracellular; that stretch reads AWNCRDGLTTCGVVYPLSKNHLVVL. Residues 199–217 traverse the membrane as a helical segment; that stretch reads AIAFFMVFGIMLQLYAQIC. Over 218-245 the chain is Cytoplasmic; it reads RIVCRHAQQIALQRHLLPASHYVATRKG. Residues 246 to 272 traverse the membrane as a helical segment; it reads IATLAVVLGAFAACWLPFTVYCLLGDA. Residues 273 to 277 are Extracellular-facing; sequence DSPRL. Residues 278-299 traverse the membrane as a helical segment; sequence YTYLTLLPATYNSMINPVIYAF. Residues 300–330 lie on the Cytoplasmic side of the membrane; the sequence is RNQDVQKVLWAICCCCSTSKIPFRSRSPSDV. C313 carries the S-palmitoyl cysteine lipid modification. 3 positions are modified to phosphoserine: S324, S326, and S328.

The protein belongs to the G-protein coupled receptor 1 family. In terms of tissue distribution, expressed in both the forebrain and hindbrain, with the highest level in habenula. Lower level expression in the testis. Expressed in several metabolically active peripheral tissues, although at lower levels than in the central nervous system (CNS).

The protein localises to the cell membrane. In terms of biological role, constitutively active G-protein coupled receptor that maintains high 3'-5'-cyclic adenosine monophosphate (cAMP) levels that a plays a role in serveral processes including meiotic arrest in oocytes or neuronal development via activation of numerous intracellular signaling pathways. Acts as an essential activator of thermogenic adipocytes and drives thermogenesis via its intrinsic G(s)-coupling activity without the requirement of a ligand. Has a potential role in modulating a number of brain functions, including behavioral responses to stress, amyloid-beta peptide generation in neurons. Stimulates neurite outgrowth in cerebellar granular neurons modulated via PKA, ERK, and most strongly PI3K-mediated signaling pathways. In Mus musculus (Mouse), this protein is G-protein coupled receptor 3 (Gpr3).